The following is a 197-amino-acid chain: Nucleoid occlusion factor SlmA (197 aa).

An HTH tetR-type domain is found at Ile-7–Leu-67. Positions Thr-30–Phe-49 form a DNA-binding region, H-T-H motif.

It belongs to the nucleoid occlusion factor SlmA family. As to quaternary structure, homodimer. Interacts with FtsZ.

It localises to the cytoplasm. The protein resides in the nucleoid. In terms of biological role, required for nucleoid occlusion (NO) phenomenon, which prevents Z-ring formation and cell division over the nucleoid. Acts as a DNA-associated cell division inhibitor that binds simultaneously chromosomal DNA and FtsZ, and disrupts the assembly of FtsZ polymers. SlmA-DNA-binding sequences (SBS) are dispersed on non-Ter regions of the chromosome, preventing FtsZ polymerization at these regions. In Shewanella oneidensis (strain ATCC 700550 / JCM 31522 / CIP 106686 / LMG 19005 / NCIMB 14063 / MR-1), this protein is Nucleoid occlusion factor SlmA.